Consider the following 201-residue polypeptide: Small ribosomal subunit protein uS4 (201 aa).

A disordered region spans residues 26–48 (LSKKNYPPGQHGNSRKRKTSEYG). An S4 RNA-binding domain is found at 92–155 (GRLDNVVFRL…KSLEVIANSL (64 aa)).

The protein belongs to the universal ribosomal protein uS4 family. In terms of assembly, part of the 30S ribosomal subunit. Contacts protein S5. The interaction surface between S4 and S5 is involved in control of translational fidelity.

Functionally, one of the primary rRNA binding proteins, it binds directly to 16S rRNA where it nucleates assembly of the body of the 30S subunit. With S5 and S12 plays an important role in translational accuracy. The chain is Small ribosomal subunit protein uS4 from Bacteroides thetaiotaomicron (strain ATCC 29148 / DSM 2079 / JCM 5827 / CCUG 10774 / NCTC 10582 / VPI-5482 / E50).